The primary structure comprises 147 residues: D-aminoacyl-tRNA deacylase (147 aa).

The short motif at 136-137 (GP) is the Gly-cisPro motif, important for rejection of L-amino acids element.

Belongs to the DTD family. As to quaternary structure, homodimer.

Its subcellular location is the cytoplasm. The catalysed reaction is glycyl-tRNA(Ala) + H2O = tRNA(Ala) + glycine + H(+). The enzyme catalyses a D-aminoacyl-tRNA + H2O = a tRNA + a D-alpha-amino acid + H(+). In terms of biological role, an aminoacyl-tRNA editing enzyme that deacylates mischarged D-aminoacyl-tRNAs. Also deacylates mischarged glycyl-tRNA(Ala), protecting cells against glycine mischarging by AlaRS. Acts via tRNA-based rather than protein-based catalysis; rejects L-amino acids rather than detecting D-amino acids in the active site. By recycling D-aminoacyl-tRNA to D-amino acids and free tRNA molecules, this enzyme counteracts the toxicity associated with the formation of D-aminoacyl-tRNA entities in vivo and helps enforce protein L-homochirality. The sequence is that of D-aminoacyl-tRNA deacylase from Streptococcus equi subsp. equi (strain 4047).